A 694-amino-acid polypeptide reads, in one-letter code: Zinc finger BED domain-containing protein 5 (694 aa).

The BED-type zinc finger occupies Arg109–Asp165. Residues Cys133, Cys136, His153, and His158 each contribute to the Zn(2+) site.

This chain is Zinc finger BED domain-containing protein 5 (ZBED5), found in Bos taurus (Bovine).